The chain runs to 128 residues: Arsenic resistance transcriptional regulator ArsR1 (128 aa).

The region spanning 11–103 (MREILTPPIV…AMLKGVVDAN (93 aa)) is the HTH arsR-type domain. Arsenite is bound by residues C43 and C45. The H-T-H motif DNA-binding region spans 44 to 67 (VCELTHALELSQPKISRHLAQLRE).

In terms of assembly, homodimer.

The protein resides in the cytoplasm. In terms of biological role, binds arsenite and regulates the expression of arsenic efflux pumps. In vitro, also binds antimony and bismuth, but not arsenate. In Pseudomonas putida (strain ATCC 47054 / DSM 6125 / CFBP 8728 / NCIMB 11950 / KT2440), this protein is Arsenic resistance transcriptional regulator ArsR1.